Reading from the N-terminus, the 708-residue chain is Phosphate acetyltransferase (708 aa).

The tract at residues E388–E708 is phosphate acetyltransferase.

In the N-terminal section; belongs to the CobB/CobQ family. The protein in the C-terminal section; belongs to the phosphate acetyltransferase and butyryltransferase family. In terms of assembly, homohexamer.

Its subcellular location is the cytoplasm. The catalysed reaction is acetyl-CoA + phosphate = acetyl phosphate + CoA. The protein operates within metabolic intermediate biosynthesis; acetyl-CoA biosynthesis; acetyl-CoA from acetate: step 2/2. Involved in acetate metabolism. This is Phosphate acetyltransferase (pta) from Buchnera aphidicola subsp. Acyrthosiphon pisum (strain APS) (Acyrthosiphon pisum symbiotic bacterium).